The sequence spans 473 residues: tRNA modification GTPase MnmE (473 aa).

Arginine 30, glutamate 95, and arginine 134 together coordinate (6S)-5-formyl-5,6,7,8-tetrahydrofolate. In terms of domain architecture, TrmE-type G spans 230–394; the sequence is GVAAVIAGRP…LKSTMAGMVE (165 aa). GTP-binding positions include 240-245, 259-265, and 284-287; these read NAGKST, SHMPGTT, and DTAG. 2 residues coordinate Mg(2+): serine 244 and threonine 265. (6S)-5-formyl-5,6,7,8-tetrahydrofolate is bound at residue lysine 473.

Belongs to the TRAFAC class TrmE-Era-EngA-EngB-Septin-like GTPase superfamily. TrmE GTPase family. Homodimer. Heterotetramer of two MnmE and two MnmG subunits. K(+) serves as cofactor.

Its subcellular location is the cytoplasm. Its function is as follows. Exhibits a very high intrinsic GTPase hydrolysis rate. Involved in the addition of a carboxymethylaminomethyl (cmnm) group at the wobble position (U34) of certain tRNAs, forming tRNA-cmnm(5)s(2)U34. In Chlorobium phaeovibrioides (strain DSM 265 / 1930) (Prosthecochloris vibrioformis (strain DSM 265)), this protein is tRNA modification GTPase MnmE.